The sequence spans 92 residues: uncharacterized protein (92 aa).

This is an uncharacterized protein from Mycobacterium tuberculosis (strain CDC 1551 / Oshkosh).